Here is a 284-residue protein sequence, read N- to C-terminus: GPN-loop GTPase 3 (284 aa).

Gly-13 to Thr-18 serves as a coordination point for GTP. Positions Gly-72–Asn-74 match the Gly-Pro-Asn (GPN)-loop; involved in dimer interface motif. Position 174-177 (Thr-174–Asp-177) interacts with GTP. The segment at Glu-262–Glu-284 is disordered.

It belongs to the GPN-loop GTPase family. In terms of assembly, heterodimer with GPN1. Binds to RNA polymerase II (RNAPII). Interacts directly with subunits RPB4 and RPB7 and the CTD of RPB1.

Functionally, small GTPase required for proper localization of RNA polymerase II (RNAPII). May act at an RNAP assembly step prior to nuclear import. This is GPN-loop GTPase 3 from Mus musculus (Mouse).